The primary structure comprises 2610 residues: E3 ubiquitin-protein ligase HECTD1 (2610 aa).

The disordered stretch occupies residues 246–269 (TVSGPSSACKPGRSTTGAPSTTAD). Residues 258-269 (RSTTGAPSTTAD) show a composition bias toward polar residues. ANK repeat units follow at residues 395 to 424 (VGQT…DVNR), 426 to 455 (QRSS…NPDL), 459 to 491 (DGKT…PVNK), and 579 to 612 (ITAT…DIFL). Residues 489 to 513 (VNKGDDKKKKDTNKDEEECNEPKGD) form a disordered region. Basic and acidic residues predominate over residues 491-501 (KGDDKKKKDTN). Disordered stretches follow at residues 627 to 657 (LAGP…ELQQ) and 707 to 748 (SSGS…LSAP). Phosphoserine occurs at positions 631 and 640. Residues 639–657 (ESKPEKEDEPQEDAKELQQ) are compositionally biased toward basic and acidic residues. Positions 707–717 (SSGSPEGGSDS) are enriched in low complexity. Over residues 718–729 (SESRSEFLEKLQ) the composition is skewed to basic and acidic residues. The region spanning 1266–1338 (VRSQVLKYMV…KFDLKLAPGY (73 aa)) is the MIB/HERC2 domain. Disordered regions lie at residues 1343 to 1406 (VASP…KTER) and 1433 to 1483 (ENVP…SMGI). Positions 1348–1365 (PVSSTVSGTTQSWSSLVK) are enriched in polar residues. Composition is skewed to low complexity over residues 1373–1395 (SAAA…ASSS) and 1441–1458 (GSSS…TGSE). Residue Ser-1384 is modified to Phosphoserine. The span at 1469–1479 (SVRTPGESSAI) shows a compositional bias: polar residues. Phosphoserine is present on Ser-1488. The disordered stretch occupies residues 1496-1515 (ELTNKEAASQRPLSSSASNR). At Ser-1567 the chain carries Phosphoserine. Disordered stretches follow at residues 1592–1611 (GAQS…VTMS) and 1674–1757 (ELDD…KGGR). A compositionally biased stretch (low complexity) spans 1600-1611 (TTPGTTSTVTMS). Positions 1674–1703 (ELDDDEDLPEPDEEDDENEDDNQEDQEYEE) are enriched in acidic residues. Thr-1760 bears the Phosphothreonine mark. Phosphoserine is present on Ser-1772. The segment at 1777 to 1797 (AFDPRPGRTNVQQTTDLEIPP) is disordered. A K-box region spans residues 2029-2103 (FTFPPDEFTS…AIVWLQNRRE (75 aa)). The region spanning 2151-2610 (IHADRKSVLE…ATMEKGFHLN (460 aa)) is the HECT domain. The disordered stretch occupies residues 2297–2318 (HCTESQSEASTEEGHDSLSVGS). At Ser-2318 the chain carries Phosphoserine. Cys-2579 serves as the catalytic Glycyl thioester intermediate.

This sequence belongs to the UPL family. K-HECT subfamily. Interacts with IGSF1.

It carries out the reaction S-ubiquitinyl-[E2 ubiquitin-conjugating enzyme]-L-cysteine + [acceptor protein]-L-lysine = [E2 ubiquitin-conjugating enzyme]-L-cysteine + N(6)-ubiquitinyl-[acceptor protein]-L-lysine.. It functions in the pathway protein modification; protein ubiquitination. Functionally, E3 ubiquitin-protein ligase which accepts ubiquitin from an E2 ubiquitin-conjugating enzyme in the form of a thioester and then directly transfers the ubiquitin to targeted substrates. Mediates 'Lys-63'-linked polyubiquitination of HSP90AA1 which leads to its intracellular localization and reduced secretion. Negatively regulating HSP90AA1 secretion in cranial mesenchyme cells may impair their emigration and may be essential for the correct development of the cranial neural folds and neural tube closure. Catalyzes ubiquitination and degradation of ZNF622, an assembly factor for the ribosomal 60S subunit, in hematopoietic cells, thereby promoting hematopoietic stem cell renewal. The polypeptide is E3 ubiquitin-protein ligase HECTD1 (Homo sapiens (Human)).